Reading from the N-terminus, the 308-residue chain is N-acetylgalactosamine kinase AgaK (308 aa).

ATP contacts are provided by residues 4–11 and 132–139; these read GLDIGGTK and GTGGGLCI. Zn(2+) is bound by residues H156, C174, C176, and C181.

This sequence belongs to the ROK (NagC/XylR) family.

The protein localises to the cytoplasm. It carries out the reaction N-acetyl-D-galactosamine + ATP = N-acetyl-D-galactosamine 6-phosphate + ADP + H(+). It catalyses the reaction N-acetyl-D-glucosamine + ATP = N-acetyl-D-glucosamine 6-phosphate + ADP + H(+). Its function is as follows. Involved in the pathway of N-acetyl-D-galactosamine degradation. Catalyzes the phosphorylation of N-acetyl-D-galactosamine (GalNAc) to yield D-galactosamine 6-phosphate (GalN-6-P). It can also phosphorylate N-acetylglucosamine (GlcNAc). In Shewanella sp. (strain ANA-3), this protein is N-acetylgalactosamine kinase AgaK.